The sequence spans 340 residues: Melanin-concentrating hormone receptor 2 (340 aa).

The Extracellular portion of the chain corresponds to 1 to 34; that stretch reads MNPFHSSCWNTSAELSNKSWNKEFAYQTASAVDT. Residues Asn10 and Asn17 are each glycosylated (N-linked (GlcNAc...) asparagine). Residues 35–57 form a helical membrane-spanning segment; the sequence is VILPSMIGIICSTGLVGNILIVF. The Cytoplasmic portion of the chain corresponds to 58–69; the sequence is TIIRSRKKTVPD. Residues 70–92 traverse the membrane as a helical segment; sequence IYICNLAVADLVHIIGMPFLIHQ. Topologically, residues 93 to 106 are extracellular; it reads WARGGEWVFGGPLC. Residues 107-129 traverse the membrane as a helical segment; it reads TIITSLDTCNQFACSAIMTVMSV. The Cytoplasmic portion of the chain corresponds to 130–149; sequence DRYFALVQPFRLTSWRTRYK. Residues 150-172 form a helical membrane-spanning segment; that stretch reads TIRINLGLWAASFILALPVWIYS. Residues 173–198 lie on the Extracellular side of the membrane; sequence KVIKFKDGVESCAFDLTSPDDVLWYT. The helical transmembrane segment at 199-221 threads the bilayer; the sequence is LYLTITTFFFPLPLILVCYILIL. Over 222–252 the chain is Cytoplasmic; it reads CYTWEMYQQNKDARCCNPSVPKQRVMKLTKM. Residues 253–272 traverse the membrane as a helical segment; it reads VLVLVAVFILSAAPYHVIQL. Topologically, residues 273 to 286 are extracellular; sequence VNLQMEQPTLAFYV. Residues 287–309 form a helical membrane-spanning segment; it reads GYYLSICLSYASSSINPFLYILL. Residues 310 to 340 lie on the Cytoplasmic side of the membrane; that stretch reads SGNFQKRLPQIQRRVTDKEIKNMGNTLKSHF.

This sequence belongs to the G-protein coupled receptor 1 family.

The protein resides in the cell membrane. Its function is as follows. Receptor for melanin-concentrating hormone, coupled to G proteins that activate phosphoinositide hydrolysis. This is Melanin-concentrating hormone receptor 2 (MCHR2) from Macaca fascicularis (Crab-eating macaque).